The primary structure comprises 338 residues: Patr class I histocompatibility antigen, alpha chain G (338 aa).

Residues 1–24 (MVVMAPRTLFLLLSGALTLTETWA) form the signal peptide. The tract at residues 25–114 (GSHSMRYFSA…LRGYYNQSEA (90 aa)) is alpha-1. At 25 to 308 (GSHSMRYFSA…KQSSLPTIPI (284 aa)) the chain is on the extracellular side. An N-linked (GlcNAc...) asparagine glycan is attached at N110. An alpha-2 region spans residues 115–206 (SSHTLQWMIG…ENGKEMLQRA (92 aa)). Cystine bridges form between C125–C188 and C227–C283. Residues 207–298 (DPPKTHVTHH…GLPEPLMLRW (92 aa)) are alpha-3. Residues 209–299 (PKTHVTHHPV…LPEPLMLRWK (91 aa)) enclose the Ig-like C1-type domain. Residues 299–308 (KQSSLPTIPI) form a connecting peptide region. The chain crosses the membrane as a helical span at residues 309 to 332 (MGIVAGLVVLAAVVTGAAVAAVLW). Over 333-338 (RKKSSD) the chain is Cytoplasmic.

This sequence belongs to the MHC class I family. In terms of assembly, heterodimer of an alpha chain and a beta chain (beta-2-microglobulin). Homodimer; disulfide-linked. Binds to LILRB1 and LILRB2.

The protein localises to the cell membrane. In terms of biological role, involved in the presentation of foreign antigens to the immune system. This is Patr class I histocompatibility antigen, alpha chain G (Patr-G) from Pan troglodytes (Chimpanzee).